Reading from the N-terminus, the 631-residue chain is Phosphomethylpyrimidine synthase (631 aa).

Residues asparagine 239, methionine 268, tyrosine 297, histidine 333, 353–355, 394–397, and glutamate 433 each bind substrate; these read SRG and DGLR. Histidine 437 contacts Zn(2+). Residue tyrosine 460 coordinates substrate. Histidine 501 provides a ligand contact to Zn(2+). Positions 581, 584, and 589 each coordinate [4Fe-4S] cluster.

Belongs to the ThiC family. In terms of assembly, homodimer. Requires [4Fe-4S] cluster as cofactor.

It catalyses the reaction 5-amino-1-(5-phospho-beta-D-ribosyl)imidazole + S-adenosyl-L-methionine = 4-amino-2-methyl-5-(phosphooxymethyl)pyrimidine + CO + 5'-deoxyadenosine + formate + L-methionine + 3 H(+). It functions in the pathway cofactor biosynthesis; thiamine diphosphate biosynthesis. In terms of biological role, catalyzes the synthesis of the hydroxymethylpyrimidine phosphate (HMP-P) moiety of thiamine from aminoimidazole ribotide (AIR) in a radical S-adenosyl-L-methionine (SAM)-dependent reaction. The polypeptide is Phosphomethylpyrimidine synthase (Salmonella paratyphi C (strain RKS4594)).